The following is a 337-amino-acid chain: Glyceraldehyde-3-phosphate dehydrogenase 1, cytosolic (337 aa).

NAD(+) contacts are provided by residues 13–14 (RI), D35, and R82. D-glyceraldehyde 3-phosphate-binding positions include 153 to 155 (SCT), T184, 213 to 214 (TG), and R236. C154 acts as the Nucleophile in catalysis. N318 is a binding site for NAD(+).

It belongs to the glyceraldehyde-3-phosphate dehydrogenase family. Homotetramer.

The protein localises to the cytoplasm. It catalyses the reaction D-glyceraldehyde 3-phosphate + phosphate + NAD(+) = (2R)-3-phospho-glyceroyl phosphate + NADH + H(+). The protein operates within carbohydrate degradation; glycolysis; pyruvate from D-glyceraldehyde 3-phosphate: step 1/5. In terms of biological role, key enzyme in glycolysis that catalyzes the first step of the pathway by converting D-glyceraldehyde 3-phosphate (G3P) into 3-phospho-D-glyceroyl phosphate. Essential for the maintenance of cellular ATP levels and carbohydrate metabolism. This is Glyceraldehyde-3-phosphate dehydrogenase 1, cytosolic (GAPC) from Hordeum vulgare (Barley).